Reading from the N-terminus, the 425-residue chain is Probable proline--tRNA ligase, mitochondrial (425 aa).

The protein belongs to the class-II aminoacyl-tRNA synthetase family.

It is found in the mitochondrion. The enzyme catalyses tRNA(Pro) + L-proline + ATP = L-prolyl-tRNA(Pro) + AMP + diphosphate. This chain is Probable proline--tRNA ligase, mitochondrial, found in Schizosaccharomyces pombe (strain 972 / ATCC 24843) (Fission yeast).